Consider the following 222-residue polypeptide: MQDTIPVLTIDGPSGAGKGTAARAVAARLGWNFLDSGAIYRALAVAAVDRGVSREDESALAALAASLDLVFGADSTARILLWDADISGRIVTEECGNLASKLAAFPAVRQALLDKQRGFRRPPGLVADGRDMGTVVFPDAPYKVFLTASAEVRARRRYNQLKEKGMDVSLAHLTEEIEERDRRDRERQIAPLRAAADAVVIDSSDLSVDEVIQVCLSVVQSH.

12 to 20 (GPSGAGKGT) contacts ATP.

Belongs to the cytidylate kinase family. Type 1 subfamily.

It localises to the cytoplasm. The catalysed reaction is CMP + ATP = CDP + ADP. The enzyme catalyses dCMP + ATP = dCDP + ADP. This chain is Cytidylate kinase, found in Methylococcus capsulatus (strain ATCC 33009 / NCIMB 11132 / Bath).